We begin with the raw amino-acid sequence, 448 residues long: Probable tryptophanase (448 aa).

At Lys-253 the chain carries N6-(pyridoxal phosphate)lysine.

It belongs to the beta-eliminating lyase family. The cofactor is pyridoxal 5'-phosphate.

The catalysed reaction is L-tryptophan + H2O = indole + pyruvate + NH4(+). Its pathway is amino-acid degradation; L-tryptophan degradation via pyruvate pathway; indole and pyruvate from L-tryptophan: step 1/1. This chain is Probable tryptophanase, found in Halobacterium salinarum (strain ATCC 29341 / DSM 671 / R1).